Reading from the N-terminus, the 164-residue chain is General odorant-binding protein 1 (164 aa).

Positions 1 to 19 (MPGVLRALLLLAAAAPLLA) are cleaved as a signal peptide. 3 cysteine pairs are disulfide-bonded: C38–C73, C69–C127, and C116–C136.

It belongs to the PBP/GOBP family. Antenna.

Present in the aqueous fluid surrounding olfactory sensory dendrites and are thought to aid in the capture and transport of hydrophobic odorants into and through this fluid. In Heliothis virescens (Tobacco budworm moth), this protein is General odorant-binding protein 1.